A 119-amino-acid polypeptide reads, in one-letter code: Non-structural protein 3b (119 aa).

Residues Y3 to Q79 form the DRBM domain.

Interacts with host RUNX1 isoform b.

Its subcellular location is the host nucleus. The protein localises to the host nucleolus. The protein resides in the host mitochondrion. In terms of biological role, induces host cell G0/G1 arrest and apoptosis. This Pipistrellus abramus (Japanese pipistrelle) protein is Non-structural protein 3b.